The following is a 700-amino-acid chain: Ribonucleoside-diphosphate reductase subunit alpha (700 aa).

Substrate-binding positions include Thr153, 169–170 (SC), Gly198, 380–384 (NLCSE), and 580–584 (PTGSI). A disulfide bridge connects residues Cys170 and Cys409. Catalysis depends on Asn380, which acts as the Proton acceptor. The Cysteine radical intermediate role is filled by Cys382. Catalysis depends on Glu384, which acts as the Proton acceptor.

Belongs to the ribonucleoside diphosphate reductase large chain family. Tetramer of two alpha and two beta subunits.

The enzyme catalyses a 2'-deoxyribonucleoside 5'-diphosphate + [thioredoxin]-disulfide + H2O = a ribonucleoside 5'-diphosphate + [thioredoxin]-dithiol. Its activity is regulated as follows. Under complex allosteric control mediated by deoxynucleoside triphosphates and ATP binding. The type of nucleotide bound at the specificity site determines substrate preference. It seems probable that ATP makes the enzyme reduce CDP and UDP, dGTP favors ADP reduction and dTTP favors GDP reduction. In terms of biological role, provides the precursors necessary for DNA synthesis. Catalyzes the biosynthesis of deoxyribonucleotides from the corresponding ribonucleotides. The chain is Ribonucleoside-diphosphate reductase subunit alpha from Bacillus subtilis (strain 168).